Here is a 675-residue protein sequence, read N- to C-terminus: MQRAMLLGLLGAAALAAVISAPVDNRDHNEEMVTRCIIEVLSNALSKSSAPTITPECRQVLRKSGKEVKGEEKGENENSKFEVRLLRDPSDASVGRWASSREETGAPVEDSPGQAKVDNEEWTGGGGHSREAVDDQESLHPSNQQVSKEAKIRHSEERGGKEEEEEEGKIYPKGEHRGDAGEEKKHTEESGEKHNAFSNKRSEASAKKKEESVARAEAHFVELEKTHSREQSSQESGEETRRQEKPQELPDQDQSEEESEEGEEGEEGATSEVTKRRPRHHHWRSQSNKPSYEGRRPLSEERKHAAGESKDANVATANLGEKRGHHLAHYRASEEEPDYGEELRSYPGFQAPQGLQYQGRGSEEVRAPSPRSEESQEKEYKRNHPDSELESTANRHSEETEEERSYEGAKGRQHRGRGREPGAYPALDSRQEKRLLDEGHDPVHESPVDTAKRYPQSKWQEQEKNYLNYDEEGDQGRWWQQEEQLEPEESREEVSFPDRQYAPYPTTEKRKRLGALFNPYFDPLQWKNSDFEKKGNPDDSFLDDDGEDGNGVTMTEKNFFPEYNYDWWEKRPFSEDVNWGYEKRSFARAPHLDLKRQYDDGVAELDQLLHYRKKAAEFPDFYDSEEQMGPHQEAEDEKDRADQRVLTEEEKKELENLAAMDLELQKIAEKFSQRG.

The signal sequence occupies residues 1–20 (MQRAMLLGLLGAAALAAVIS). An intrachain disulfide couples C36 to C57. The span at 64-90 (SGKEVKGEEKGENENSKFEVRLLRDPS) shows a compositional bias: basic and acidic residues. Disordered stretches follow at residues 64 to 507 (SGKE…YPTT) and 528 to 555 (NSDFEKKGNPDDSFLDDDGEDGNGVTMT). A phosphoserine mark is found at S93, S99, S100, S129, and S147. O-linked (Xyl...) (chondroitin sulfate) serine glycosylation occurs at S93. 2 stretches are compositionally biased toward basic and acidic residues: residues 148 to 161 (KEAKIRHSEERGGK) and 168 to 248 (GKIY…KPQE). At S190 the chain carries Phosphoserine. S236 carries an O-linked (Xyl...) (chondroitin sulfate) serine glycan. The span at 250–269 (PDQDQSEEESEEGEEGEEGA) shows a compositional bias: acidic residues. 5 positions are modified to phosphoserine: S255, S259, S291, S309, and S333. Residues 292 to 311 (YEGRRPLSEERKHAAGESKD) are compositionally biased toward basic and acidic residues. The residue at position 339 (Y339) is a Sulfotyrosine. 2 stretches are compositionally biased toward basic and acidic residues: residues 361 to 410 (GSEE…EGAK) and 429 to 452 (SRQEKRLLDEGHDPVHESPVDTAK). A phosphoserine mark is found at S362, S372, S375, and S397. Y469 is subject to Sulfotyrosine. 3 positions are modified to phosphoserine: S490, S529, and S540. Residue Y563 is modified to Sulfotyrosine. The disordered stretch occupies residues 620–646 (DFYDSEEQMGPHQEAEDEKDRADQRVL). Y622 carries the post-translational modification Sulfotyrosine; partial. S624 is subject to Phosphoserine. Positions 637–646 (EKDRADQRVL) are enriched in basic and acidic residues. R674 is modified (arginine amide; in CCB peptide short form).

The protein belongs to the chromogranin/secretogranin protein family. Interacts with ITPR1 in the secretory granules. Post-translationally, extensively processed in glucagonoma tissue by limited proteolysis at conserved basic residues. Alternative processing are seen in different tissues. The proglucagon-converting enzymes present in transformed alpha-cells are likely candidates to be involved in tissue-specific processing. Expressed in the brain, adrenal medulla and anterior pituitary. In the brain, localized to the hippocampal formation, the endocrine hypothalamus, the olfactory system, and in anatomically distinct structures in the pons-medulla.

The protein localises to the secreted. Secretogranin-1 is a neuroendocrine secretory granule protein, which may be the precursor for other biologically active peptides. In Rattus norvegicus (Rat), this protein is Secretogranin-1 (Chgb).